The sequence spans 257 residues: Acetylglutamate kinase (257 aa).

Substrate is bound by residues 43–44 (GG), Arg-65, and Asn-157.

It belongs to the acetylglutamate kinase family. ArgB subfamily.

The protein resides in the cytoplasm. It carries out the reaction N-acetyl-L-glutamate + ATP = N-acetyl-L-glutamyl 5-phosphate + ADP. It functions in the pathway amino-acid biosynthesis; L-arginine biosynthesis; N(2)-acetyl-L-ornithine from L-glutamate: step 2/4. In terms of biological role, catalyzes the ATP-dependent phosphorylation of N-acetyl-L-glutamate. This chain is Acetylglutamate kinase, found in Pasteurella multocida (strain Pm70).